The following is a 582-amino-acid chain: uncharacterized protein (582 aa).

Residues 1–27 form the signal peptide; sequence MNYAVLPPELNSLRMFTGAGSAPMLAA. The segment covering 241–257 has biased composition (gly residues); it reads GNGRAGLPGSGNVGNGN. The interval 241–278 is disordered; the sequence is GNGRAGLPGSGNVGNGNLGNSNLGSGNTGNSNVGFGNT. The segment covering 258–278 has biased composition (low complexity); sequence LGNSNLGSGNTGNSNVGFGNT.

Belongs to the mycobacterial PPE family.

This is an uncharacterized protein from Mycobacterium tuberculosis (strain ATCC 25618 / H37Rv).